The following is a 200-amino-acid chain: COMM domain-containing protein 7 (200 aa).

Residues 133–200 enclose the COMM domain; the sequence is QLIDMEWRFG…RVRASMECLS (68 aa).

The protein belongs to the COMM domain-containing protein 7 family. In terms of assembly, component of the commander complex consisting of the CCC subcomplex and the retriever subcomplex. Component of the CCC (COMMD/CCDC22/CCDC93) subcomplex consisting of COMMD1, COMMD2, COMMD3, COMMD4, COMMD5, COMMD6, COMMD7, COMMD8, COMMD9, COMMD10, CCDC22 and CCDC93; within the complex forms a heterodimer with COMMD9. Interacts with RELA. Interacts with CCDC22, CCDC93, SCNN1B, CUL7.

The protein localises to the cytoplasmic vesicle. Functionally, scaffold protein in the commander complex that is essential for endosomal recycling of transmembrane cargos; the commander complex is composed of the CCC subcomplex and the retriever subcomplex. May modulate activity of cullin-RING E3 ubiquitin ligase (CRL) complexes. Associates with the NF-kappa-B complex and suppresses its transcriptional activity. This is COMM domain-containing protein 7 (Commd7) from Mus musculus (Mouse).